A 425-amino-acid polypeptide reads, in one-letter code: Serine--tRNA ligase (425 aa).

233–235 (TAE) is a binding site for L-serine. Position 264–266 (264–266 (RAE)) interacts with ATP. E287 provides a ligand contact to L-serine. 351–354 (EISS) lines the ATP pocket. An L-serine-binding site is contributed by S387.

Belongs to the class-II aminoacyl-tRNA synthetase family. Type-1 seryl-tRNA synthetase subfamily. In terms of assembly, homodimer. The tRNA molecule binds across the dimer.

It is found in the cytoplasm. It carries out the reaction tRNA(Ser) + L-serine + ATP = L-seryl-tRNA(Ser) + AMP + diphosphate + H(+). The enzyme catalyses tRNA(Sec) + L-serine + ATP = L-seryl-tRNA(Sec) + AMP + diphosphate + H(+). The protein operates within aminoacyl-tRNA biosynthesis; selenocysteinyl-tRNA(Sec) biosynthesis; L-seryl-tRNA(Sec) from L-serine and tRNA(Sec): step 1/1. In terms of biological role, catalyzes the attachment of serine to tRNA(Ser). Is also able to aminoacylate tRNA(Sec) with serine, to form the misacylated tRNA L-seryl-tRNA(Sec), which will be further converted into selenocysteinyl-tRNA(Sec). The chain is Serine--tRNA ligase from Clostridium perfringens (strain 13 / Type A).